A 477-amino-acid polypeptide reads, in one-letter code: Glutamate--tRNA ligase (477 aa).

The 'HIGH' region signature appears at 8–18 (PSPTGTLHIGT). The short motif at 247 to 251 (KLSKR) is the 'KMSKS' region element. Lys-250 serves as a coordination point for ATP.

It belongs to the class-I aminoacyl-tRNA synthetase family. Glutamate--tRNA ligase type 1 subfamily. Monomer.

The protein localises to the cytoplasm. The enzyme catalyses tRNA(Glu) + L-glutamate + ATP = L-glutamyl-tRNA(Glu) + AMP + diphosphate. Functionally, catalyzes the attachment of glutamate to tRNA(Glu) in a two-step reaction: glutamate is first activated by ATP to form Glu-AMP and then transferred to the acceptor end of tRNA(Glu). This chain is Glutamate--tRNA ligase, found in Synechococcus sp. (strain CC9605).